The primary structure comprises 798 residues: MKAFSCLLAVIATAASLFQHVDASHARDKLNNISRVERPVIHTPSRRVHAHSHFDLTFDLYPRRNRIKLQLEPNHDVLSHNARVTFLDTEGNVDRIERIERRDHSVFKGWAWTQAKSGVWERVGWARIIMHRDGEDPLFEGVFTVMHDHHQVIAKSKYVRKRHQQDPPLDNTPGEYMLLFRGSDIAQTQSTGNVERSIMSSPSCDADTLAYDSNSNFMFPPLPEENNTSIWNYFMTSIGKRQMTDTGGVVPGSRDLKETIGSTSGCPNTRKVALIGVVADCTYTNTFASEMDARADIISVVNAASVVYEHSFNISLTLGEINILPKNCPATASSATPFNQQCDDRAGGGSFTLADRLNTFSAWRGKKTDDFAFWTLMTDCTTENQVGLAWAAQLCVKGVQGNPDSRNSSSQAVAGANVVSKTDNTWQVFAHEAGHIFGAVHDCDSMLCQNPANPDNSRCCPATASTCDARGRFMMNPTSGSQITNFSPCSIGQICSRMARRTILTNCLTTNRGVDTISGQQCGNGIVEDGEDCDCGDEESCKGNTCCDPKTCKYTSGSQCDDANEECCKGCKFASSSTICRTSSGPCDPEEKCSGNSGDCPHDIHSKDGGTCGTDLQCASGQCTSRDLQCQMHLGNQVAGSRTVAFDSYGCEVACKDPDRPNVRYEGSLTFLDGTPCGGGGTCKNGQCSGSTFGNEVSDWVSRHKPIVIGVAVGAGCLLLLAIASCICGRSRRQRPRNRKMPPINMRPMAPAYNGWNGAPPNAQQSSPGGHPPYNNIPPPINAPPPAYPGHMPPTRYA.

Positions Met-1–Ala-23 are cleaved as a signal peptide. The Extracellular segment spans residues Ser-24–Pro-706. Residues Asn-32, Asn-226, Asn-227, Asn-313, and Asn-407 are each glycosylated (N-linked (GlcNAc...) asparagine). The Peptidase M12B domain maps to Lys-271–Thr-510. Cystine bridges form between Cys-395/Cys-495, Cys-448/Cys-459, and Cys-580/Cys-600. His-431 contributes to the Zn(2+) binding site. Residue Glu-432 is part of the active site. Zn(2+) is bound by residues His-435 and His-441. Residues Gly-519–Asp-608 enclose the Disintegrin domain. A helical transmembrane segment spans residues Ile-707–Ile-727. The Cytoplasmic portion of the chain corresponds to Cys-728–Ala-798. Residues Gln-734 to Ala-798 form a disordered region. The segment covering Asn-775–Met-792 has biased composition (pro residues).

Zn(2+) is required as a cofactor.

The protein resides in the membrane. Probable zinc protease. The polypeptide is Disintegrin and metalloproteinase domain-containing protein B (ADM-B) (Trichophyton verrucosum (strain HKI 0517)).